Consider the following 166-residue polypeptide: Regulator of ribonuclease activity A (166 aa).

Belongs to the RraA family. In terms of assembly, homotrimer. Binds to both RNA-binding sites in the C-terminal region of Rne and to RhlB.

The protein localises to the cytoplasm. Globally modulates RNA abundance by binding to RNase E (Rne) and regulating its endonucleolytic activity. Can modulate Rne action in a substrate-dependent manner by altering the composition of the degradosome. Modulates RNA-binding and helicase activities of the degradosome. This is Regulator of ribonuclease activity A from Histophilus somni (strain 2336) (Haemophilus somnus).